The following is a 354-amino-acid chain: V-type proton ATPase subunit C (354 aa).

Belongs to the V-ATPase C subunit family. As to quaternary structure, V-ATPase is a heteromultimeric enzyme composed of a peripheral catalytic V1 complex (components A to H) attached to an integral membrane V0 proton pore complex (components: a, c, c', c'' and d).

It is found in the vacuole membrane. In terms of biological role, subunit of the peripheral V1 complex of vacuolar ATPase. Subunit C is necessary for the assembly of the catalytic sector of the enzyme and is likely to have a specific function in its catalytic activity. V-ATPase is responsible for acidifying a variety of intracellular compartments in eukaryotic cells. The polypeptide is V-type proton ATPase subunit C (VATC) (Hordeum vulgare (Barley)).